Reading from the N-terminus, the 191-residue chain is Small ribosomal subunit protein eS7z (191 aa).

Met-1 is subject to N-acetylmethionine. A coiled-coil region spans residues 15–50 (ELSELDEQVAQAFFDLENTNQELKSELKDLYVNSAV).

The protein belongs to the eukaryotic ribosomal protein eS7 family.

This chain is Small ribosomal subunit protein eS7z (RPS7A), found in Arabidopsis thaliana (Mouse-ear cress).